Consider the following 164-residue polypeptide: MPLLDSFKVNHTKMPAPAVRLAKVMKTPKGDDISVFDLRFCVPNKDIMSEKGTHTLEHLFAGFMRDHLNSDSVEIIDISPMGCRTGFYMSLIGTPDEKSVAKAWEEAMKDVLSVSDQSKIPELNIYQCGTCAMHSLDEAKQIAQKVLNLGISIMNNKELKLENA.

3 residues coordinate Fe cation: His54, His58, and Cys128.

This sequence belongs to the LuxS family. In terms of assembly, homodimer. Requires Fe cation as cofactor.

The catalysed reaction is S-(5-deoxy-D-ribos-5-yl)-L-homocysteine = (S)-4,5-dihydroxypentane-2,3-dione + L-homocysteine. Involved in the synthesis of autoinducer 2 (AI-2) which is secreted by bacteria and is used to communicate both the cell density and the metabolic potential of the environment. The regulation of gene expression in response to changes in cell density is called quorum sensing. Catalyzes the transformation of S-ribosylhomocysteine (RHC) to homocysteine (HC) and 4,5-dihydroxy-2,3-pentadione (DPD). The chain is S-ribosylhomocysteine lyase from Campylobacter jejuni subsp. jejuni serotype O:23/36 (strain 81-176).